The primary structure comprises 154 residues: UPF0178 protein BAV3236 (154 aa).

The protein belongs to the UPF0178 family.

The polypeptide is UPF0178 protein BAV3236 (Bordetella avium (strain 197N)).